A 215-amino-acid chain; its full sequence is FGFR1 oncogene partner 2 homolog (215 aa).

Coiled-coil stretches lie at residues 5-104 (IEKA…MSKY) and 161-185 (KEQE…ITRE). The interval 194-215 (DASESTSLSALVTNSDLSLRKN) is disordered. Residues 197–215 (ESTSLSALVTNSDLSLRKN) show a composition bias toward polar residues.

Belongs to the SIKE family.

The protein localises to the cytoplasm. In terms of biological role, may be involved in wound healing pathway. In Pongo abelii (Sumatran orangutan), this protein is FGFR1 oncogene partner 2 homolog (FGFR1OP2).